The chain runs to 1382 residues: DNA-directed RNA polymerase subunit beta' (1382 aa).

Residues Cys-70, Cys-72, Cys-85, and Cys-88 each coordinate Zn(2+). Mg(2+) contacts are provided by Asp-460, Asp-462, and Asp-464. Residues Cys-808, Cys-882, Cys-889, and Cys-892 each contribute to the Zn(2+) site.

It belongs to the RNA polymerase beta' chain family. In terms of assembly, the RNAP catalytic core consists of 2 alpha, 1 beta, 1 beta' and 1 omega subunit. When a sigma factor is associated with the core the holoenzyme is formed, which can initiate transcription. The cofactor is Mg(2+). Requires Zn(2+) as cofactor.

It catalyses the reaction RNA(n) + a ribonucleoside 5'-triphosphate = RNA(n+1) + diphosphate. DNA-dependent RNA polymerase catalyzes the transcription of DNA into RNA using the four ribonucleoside triphosphates as substrates. This Geobacter sp. (strain M21) protein is DNA-directed RNA polymerase subunit beta'.